Here is a 161-residue protein sequence, read N- to C-terminus: Phosphopantetheine adenylyltransferase (161 aa).

The protein belongs to the eukaryotic CoaD family.

The protein localises to the cytoplasm. The catalysed reaction is (R)-4'-phosphopantetheine + ATP + H(+) = 3'-dephospho-CoA + diphosphate. It functions in the pathway cofactor biosynthesis; coenzyme A biosynthesis. Functionally, reversibly transfers an adenylyl group from ATP to 4'-phosphopantetheine, yielding dephospho-CoA (dPCoA) and pyrophosphate. The chain is Phosphopantetheine adenylyltransferase from Methanosarcina barkeri (strain Fusaro / DSM 804).